The following is a 448-amino-acid chain: Phosphoglucosamine mutase (448 aa).

The active-site Phosphoserine intermediate is the serine 100. Residues serine 100, aspartate 240, aspartate 242, and aspartate 244 each contribute to the Mg(2+) site. Phosphoserine is present on serine 100.

The protein belongs to the phosphohexose mutase family. Mg(2+) is required as a cofactor. Activated by phosphorylation.

It carries out the reaction alpha-D-glucosamine 1-phosphate = D-glucosamine 6-phosphate. In terms of biological role, catalyzes the conversion of glucosamine-6-phosphate to glucosamine-1-phosphate. This is Phosphoglucosamine mutase from Clostridium acetobutylicum (strain ATCC 824 / DSM 792 / JCM 1419 / IAM 19013 / LMG 5710 / NBRC 13948 / NRRL B-527 / VKM B-1787 / 2291 / W).